A 272-amino-acid chain; its full sequence is ATP synthase subunit a (272 aa).

Helical transmembrane passes span 39-59 (GFWAVHVDTLGWSLFMGLIFI), 103-123 (VAPLALTIFVWVFLMNSLKWI), 124-144 (PVDYIPGLAHAMGLPYFKIVP), 152-172 (FGISLGVFLLIIFYSIKVKGV), 181-201 (FTPFNHWALIPFNLFLEIIGL), 221-241 (VVFILIALLPFYVQWGLNVPW), and 242-262 (AIFHILVIPLQAFIFMVLTVV).

Belongs to the ATPase A chain family. In terms of assembly, F-type ATPases have 2 components, CF(1) - the catalytic core - and CF(0) - the membrane proton channel. CF(1) has five subunits: alpha(3), beta(3), gamma(1), delta(1), epsilon(1). CF(0) has three main subunits: a(1), b(2) and c(9-12). The alpha and beta chains form an alternating ring which encloses part of the gamma chain. CF(1) is attached to CF(0) by a central stalk formed by the gamma and epsilon chains, while a peripheral stalk is formed by the delta and b chains.

The protein localises to the cell inner membrane. Key component of the proton channel; it plays a direct role in the translocation of protons across the membrane. In Ectopseudomonas mendocina (strain ymp) (Pseudomonas mendocina), this protein is ATP synthase subunit a.